The primary structure comprises 494 residues: Calmodulin-binding protein 60 A (494 aa).

The tract at residues 1–62 (MRIPTYDFGS…AGIKWICEKE (62 aa)) is calmodulin-binding. A DNA-binding region spans residues 132 to 252 (VSDWTDEDIR…AFHRRLNLSN (121 aa)).

The protein belongs to the plant ACBP60 protein family. Interacts with calmodulin (CaM). In terms of tissue distribution, expressed in stems, flowers and root.

It is found in the nucleus. Transcription activator that binds DNA in a sequence-specific manner, likely 5'-GAAATTTTGG-3', to promote the expression of target genes. This chain is Calmodulin-binding protein 60 A, found in Arabidopsis thaliana (Mouse-ear cress).